A 440-amino-acid chain; its full sequence is Thymidine phosphorylase (440 aa).

This sequence belongs to the thymidine/pyrimidine-nucleoside phosphorylase family. As to quaternary structure, homodimer.

It carries out the reaction thymidine + phosphate = 2-deoxy-alpha-D-ribose 1-phosphate + thymine. It participates in pyrimidine metabolism; dTMP biosynthesis via salvage pathway; dTMP from thymine: step 1/2. Its function is as follows. The enzymes which catalyze the reversible phosphorolysis of pyrimidine nucleosides are involved in the degradation of these compounds and in their utilization as carbon and energy sources, or in the rescue of pyrimidine bases for nucleotide synthesis. The chain is Thymidine phosphorylase from Erwinia tasmaniensis (strain DSM 17950 / CFBP 7177 / CIP 109463 / NCPPB 4357 / Et1/99).